A 343-amino-acid polypeptide reads, in one-letter code: Anthranilate phosphoribosyltransferase (343 aa).

5-phospho-alpha-D-ribose 1-diphosphate-binding positions include G79, 82–83, T87, 89–92, 106–114, and S118; these read GD, NVST, and KHGNRAASS. Anthranilate is bound at residue G79. Residue S91 coordinates Mg(2+). N109 is a binding site for anthranilate. Anthranilate is bound at residue R164. Mg(2+)-binding residues include D223 and E224.

The protein belongs to the anthranilate phosphoribosyltransferase family. In terms of assembly, homodimer. The cofactor is Mg(2+).

The catalysed reaction is N-(5-phospho-beta-D-ribosyl)anthranilate + diphosphate = 5-phospho-alpha-D-ribose 1-diphosphate + anthranilate. It functions in the pathway amino-acid biosynthesis; L-tryptophan biosynthesis; L-tryptophan from chorismate: step 2/5. Its function is as follows. Catalyzes the transfer of the phosphoribosyl group of 5-phosphorylribose-1-pyrophosphate (PRPP) to anthranilate to yield N-(5'-phosphoribosyl)-anthranilate (PRA). The polypeptide is Anthranilate phosphoribosyltransferase (Metallosphaera sedula (strain ATCC 51363 / DSM 5348 / JCM 9185 / NBRC 15509 / TH2)).